A 619-amino-acid polypeptide reads, in one-letter code: Chaperone protein HscA homolog (619 aa).

It belongs to the heat shock protein 70 family.

Chaperone involved in the maturation of iron-sulfur cluster-containing proteins. Has a low intrinsic ATPase activity which is markedly stimulated by HscB. In Acinetobacter baumannii (strain ATCC 17978 / DSM 105126 / CIP 53.77 / LMG 1025 / NCDC KC755 / 5377), this protein is Chaperone protein HscA homolog.